The sequence spans 116 residues: Large ribosomal subunit protein uL18 (116 aa).

Belongs to the universal ribosomal protein uL18 family. As to quaternary structure, part of the 50S ribosomal subunit; part of the 5S rRNA/L5/L18/L25 subcomplex. Contacts the 5S and 23S rRNAs.

Functionally, this is one of the proteins that bind and probably mediate the attachment of the 5S RNA into the large ribosomal subunit, where it forms part of the central protuberance. The sequence is that of Large ribosomal subunit protein uL18 from Alcanivorax borkumensis (strain ATCC 700651 / DSM 11573 / NCIMB 13689 / SK2).